The chain runs to 1822 residues: Sperm flagellar protein 2 (1822 aa).

Residues 1–105 (MSEILCQWLN…LLYQLYIALQ (105 aa)) form the Calponin-homology (CH) domain. 4 coiled-coil regions span residues 227–260 (KALE…KDLQ), 321–396 (AHEA…KQAK), 732–758 (NQAQ…KAQK), and 871–909 (CEKV…LAEL). Disordered stretches follow at residues 896–1004 (KEAE…VPQP), 1278–1327 (EEEK…EATP), 1664–1718 (SIPS…NNEK), and 1803–1822 (EHVQ…EEKK). The span at 911 to 920 (LPTPPPAPPP) shows a compositional bias: pro residues. Composition is skewed to basic and acidic residues over residues 921–930 (EPEKEKEIHQ) and 949–968 (PHGK…ETAL). The segment covering 975-987 (KGKSSGGKVPVKK) has biased composition (low complexity). 2 stretches are compositionally biased toward basic and acidic residues: residues 1278–1292 (EEEK…KEKS) and 1303–1314 (KEPPKKKQEDKK). The segment at 1324-1676 (EATPVIVTTE…SAEKTSSTDA (353 aa)) is interaction with IFT20. Positions 1686-1712 (EENAAREERKLKDDTEKREQKDEEIPE) form a coiled coil. Residues 1688–1708 (NAAREERKLKDDTEKREQKDE) are compositionally biased toward basic and acidic residues.

In terms of assembly, interacts (via C-terminus) with IFT20. Interacts with DYNC1I2.

It localises to the cell projection. The protein localises to the cilium. Its subcellular location is the flagellum. It is found in the cytoplasm. The protein resides in the golgi apparatus. In terms of biological role, required for correct axoneme development in spermatozoa. Important for normal development of the manchette and sperm head morphology. Essential for male fertility. Plays a role in localization of the intraflagellar transport protein IFT20 to the manchette, suggesting function as an adapter for dynein-mediated protein transport during spermatogenesis. Also plays a role in bone growth where it seems to be required for normal osteoblast differentiation. The chain is Sperm flagellar protein 2 (SPEF2) from Homo sapiens (Human).